Consider the following 172-residue polypeptide: Adenine phosphoribosyltransferase (172 aa).

It belongs to the purine/pyrimidine phosphoribosyltransferase family. Homodimer.

It is found in the cytoplasm. The catalysed reaction is AMP + diphosphate = 5-phospho-alpha-D-ribose 1-diphosphate + adenine. It functions in the pathway purine metabolism; AMP biosynthesis via salvage pathway; AMP from adenine: step 1/1. Functionally, catalyzes a salvage reaction resulting in the formation of AMP, that is energically less costly than de novo synthesis. This is Adenine phosphoribosyltransferase from Herpetosiphon aurantiacus (strain ATCC 23779 / DSM 785 / 114-95).